Reading from the N-terminus, the 1142-residue chain is Serine/threonine-protein kinase dst2 (1142 aa).

The region spanning 20–276 (FELIEEIAEG…ATELLKHPFV (257 aa)) is the Protein kinase domain. Residues 26–34 (IAEGSFGTV) and Lys49 contribute to the ATP site. Asp141 (proton acceptor) is an active-site residue. The segment covering 300-322 (LEEGGDEDEDSSEQEGMDSDDKD) has biased composition (acidic residues). Disordered stretches follow at residues 300–492 (LEEG…KTLE), 515–636 (KKQQ…KSTP), 744–768 (ETNH…TEQR), 939–974 (SIEE…GSVT), and 1040–1142 (EEQK…DNQD). Basic and acidic residues predominate over residues 323 to 336 (SDLKKSVGTSDRKS). Polar residues predominate over residues 355 to 365 (QRKSTGQNLQL). The segment covering 371-390 (QQSSSSSSSSSSSLSSQSLQ) has biased composition (low complexity). The segment covering 391-413 (PQAVNKSTDRLSANINGSNTKSN) has biased composition (polar residues). Positions 421–452 (AAASASASSLNLSTGNLQQSLSGSGSITTNSG) are enriched in low complexity. The segment covering 467-477 (SSDDRSPDIRT) has biased composition (basic and acidic residues). The span at 541 to 554 (KQNAAKATQQQKQS) shows a compositional bias: low complexity. 4 stretches are compositionally biased toward basic and acidic residues: residues 555–588 (AAKE…KKNQ), 597–635 (KVTD…DKST), 744–760 (ETNH…EQHI), and 939–969 (SIEE…EQKK). Residues 716–1050 (QEYHTVLREN…EQKKSKLKLK (335 aa)) adopt a coiled-coil conformation. Residues 1068–1091 (TGTTPPSTSSNQKTLNNSNGASSN) show a composition bias toward low complexity.

It belongs to the protein kinase superfamily. STE Ser/Thr protein kinase family. STE20 subfamily. Requires Mg(2+) as cofactor.

The enzyme catalyses L-seryl-[protein] + ATP = O-phospho-L-seryl-[protein] + ADP + H(+). The catalysed reaction is L-threonyl-[protein] + ATP = O-phospho-L-threonyl-[protein] + ADP + H(+). The sequence is that of Serine/threonine-protein kinase dst2 from Dictyostelium discoideum (Social amoeba).